Reading from the N-terminus, the 506-residue chain is Histidine ammonia-lyase (506 aa).

Residues 143 to 145 constitute a cross-link (5-imidazolinone (Ala-Gly)); it reads ASG. Residue S144 is modified to 2,3-didehydroalanine (Ser).

Belongs to the PAL/histidase family. Post-translationally, contains an active site 4-methylidene-imidazol-5-one (MIO), which is formed autocatalytically by cyclization and dehydration of residues Ala-Ser-Gly.

It localises to the cytoplasm. It catalyses the reaction L-histidine = trans-urocanate + NH4(+). The protein operates within amino-acid degradation; L-histidine degradation into L-glutamate; N-formimidoyl-L-glutamate from L-histidine: step 1/3. In Salmonella schwarzengrund (strain CVM19633), this protein is Histidine ammonia-lyase.